A 123-amino-acid polypeptide reads, in one-letter code: Ragulator complex protein LAMTOR3-A (123 aa).

The protein belongs to the LAMTOR3 family. Part of the Ragulator complex composed of lamtor1, lamtor2, lamtor3, lamtor4 and lamtor5. The Ragulator complex interacts with slc38a9; the probable amino acid sensor. Component of the lysosomal folliculin complex (LFC).

The protein localises to the late endosome membrane. In terms of biological role, as part of the Ragulator complex it is involved in amino acid sensing and activation of mTORC1, a signaling complex promoting cell growth in response to growth factors, energy levels, and amino acids. Activated by amino acids through a mechanism involving the lysosomal V-ATPase, the Ragulator plays a dual role for the small GTPases Rag (RagA/RRAGA, RagB/RRAGB, RagC/RRAGC and/or RagD/RRAGD): it (1) acts as a guanine nucleotide exchange factor (GEF), activating the small GTPases Rag and (2) mediates recruitment of Rag GTPases to the lysosome membrane. Activated Ragulator and Rag GTPases function as a scaffold recruiting mTORC1 to lysosomes where it is in turn activated. This Xenopus laevis (African clawed frog) protein is Ragulator complex protein LAMTOR3-A (lamtor3-a).